The sequence spans 811 residues: Probable potassium transporter 16 (811 aa).

Topologically, residues methionine 1–arginine 66 are cytoplasmic. Residues leucine 67 to tyrosine 87 form a helical membrane-spanning segment. The Extracellular portion of the chain corresponds to glutamine 88–aspartate 100. Residues isoleucine 101–valine 121 traverse the membrane as a helical segment. Over phenylalanine 122–lysine 190 the chain is Cytoplasmic. The helical transmembrane segment at isoleucine 191–asparagine 211 threads the bilayer. The Extracellular portion of the chain corresponds to proline 212–proline 228. Residues histidine 229–valine 249 form a helical membrane-spanning segment. The Cytoplasmic portion of the chain corresponds to glutamine 250–lysine 256. Residues isoleucine 257 to isoleucine 277 traverse the membrane as a helical segment. At tyrosine 278–glutamine 310 the chain is on the extracellular side. The helical transmembrane segment at leucine 311–phenylalanine 331 threads the bilayer. The Cytoplasmic segment spans residues serine 332–glutamine 337. A helical transmembrane segment spans residues leucine 338 to tyrosine 358. Topologically, residues leucine 359 to proline 379 are extracellular. The helical transmembrane segment at leucine 380–valine 400 threads the bilayer. Residues serine 401 to asparagine 438 are Cytoplasmic-facing. Residues phenylalanine 439–valine 459 traverse the membrane as a helical segment. The Extracellular segment spans residues lysine 460 to glutamate 463. The chain crosses the membrane as a helical span at residues isoleucine 464 to valine 484. Residues tryptophan 485–asparagine 488 are Cytoplasmic-facing. A helical transmembrane segment spans residues isoleucine 489–alanine 509. The Extracellular portion of the chain corresponds to valine 510–tyrosine 519. A helical transmembrane segment spans residues methionine 520–valine 540. The Cytoplasmic portion of the chain corresponds to lysine 541–isoleucine 811.

The protein belongs to the HAK/KUP transporter (TC 2.A.72.3) family.

It is found in the membrane. Its function is as follows. High-affinity potassium transporter. This is Probable potassium transporter 16 (HAK16) from Oryza sativa subsp. japonica (Rice).